The sequence spans 187 residues: GTP cyclohydrolase 1 1 (187 aa).

It belongs to the GTP cyclohydrolase I family. In terms of assembly, homomer.

The enzyme catalyses GTP + H2O = 7,8-dihydroneopterin 3'-triphosphate + formate + H(+). Its pathway is cofactor biosynthesis; 7,8-dihydroneopterin triphosphate biosynthesis; 7,8-dihydroneopterin triphosphate from GTP: step 1/1. This is GTP cyclohydrolase 1 1 from Pseudomonas syringae pv. tomato (strain ATCC BAA-871 / DC3000).